A 546-amino-acid polypeptide reads, in one-letter code: RuBisCO large subunit-binding protein subunit alpha, chloroplastic (546 aa).

The transit peptide at 1–6 directs the protein to the chloroplast; the sequence is RFSVRA. Residue Ser50 is modified to Phosphoserine.

It belongs to the chaperonin (HSP60) family. In terms of assembly, oligomer of probably six alpha and six beta subunits.

The protein resides in the plastid. It localises to the chloroplast. This protein binds RuBisCO small and large subunits and is implicated in the assembly of the enzyme oligomer. In Brassica napus (Rape), this protein is RuBisCO large subunit-binding protein subunit alpha, chloroplastic.